Reading from the N-terminus, the 429-residue chain is Serine hydroxymethyltransferase (429 aa).

Residues Leu133 and 137–139 (GHL) each bind (6S)-5,6,7,8-tetrahydrofolate. At Lys243 the chain carries N6-(pyridoxal phosphate)lysine. Glu259 contacts (6S)-5,6,7,8-tetrahydrofolate.

This sequence belongs to the SHMT family. Homodimer. Pyridoxal 5'-phosphate is required as a cofactor.

Its subcellular location is the cytoplasm. It catalyses the reaction (6R)-5,10-methylene-5,6,7,8-tetrahydrofolate + glycine + H2O = (6S)-5,6,7,8-tetrahydrofolate + L-serine. The protein operates within one-carbon metabolism; tetrahydrofolate interconversion. Its pathway is amino-acid biosynthesis; glycine biosynthesis; glycine from L-serine: step 1/1. Catalyzes the reversible interconversion of serine and glycine with tetrahydrofolate (THF) serving as the one-carbon carrier. This reaction serves as the major source of one-carbon groups required for the biosynthesis of purines, thymidylate, methionine, and other important biomolecules. Also exhibits THF-independent aldolase activity toward beta-hydroxyamino acids, producing glycine and aldehydes, via a retro-aldol mechanism. The protein is Serine hydroxymethyltransferase of Aster yellows witches'-broom phytoplasma (strain AYWB).